The following is a 412-amino-acid chain: CCA-adding enzyme (412 aa).

ATP-binding residues include Ser41 and Lys44. CTP is bound by residues Ser41 and Lys44. Mg(2+) is bound by residues Asp53, Asp55, and Asp106. Residues His129, Lys149, and Tyr158 each coordinate ATP. CTP contacts are provided by His129, Lys149, and Tyr158.

The protein belongs to the tRNA nucleotidyltransferase/poly(A) polymerase family. Archaeal CCA-adding enzyme subfamily. As to quaternary structure, homodimer. Forms a tetramer upon binding two tRNAs. However, tRNA-induced tetramer formation is not required for CCA addition. The cofactor is Mg(2+).

It carries out the reaction a tRNA precursor + 2 CTP + ATP = a tRNA with a 3' CCA end + 3 diphosphate. The catalysed reaction is a tRNA with a 3' CCA end + 2 CTP + ATP = a tRNA with a 3' CCACCA end + 3 diphosphate. Its function is as follows. Catalyzes the addition and repair of the essential 3'-terminal CCA sequence in tRNAs without using a nucleic acid template. Adds these three nucleotides in the order of C, C, and A to the tRNA nucleotide-73, using CTP and ATP as substrates and producing inorganic pyrophosphate. tRNA 3'-terminal CCA addition is required both for tRNA processing and repair. Also involved in tRNA surveillance by mediating tandem CCA addition to generate a CCACCA at the 3' terminus of unstable tRNAs. While stable tRNAs receive only 3'-terminal CCA, unstable tRNAs are marked with CCACCA and rapidly degraded. The structural flexibility of RNA controls the choice between CCA versus CCACCA addition: following the first CCA addition cycle, nucleotide-binding to the active site triggers a clockwise screw motion, producing torque on the RNA. This ejects stable RNAs, whereas unstable RNAs are refolded while bound to the enzyme and subjected to a second CCA catalytic cycle. This Saccharolobus shibatae (strain ATCC 51178 / DSM 5389 / JCM 8931 / NBRC 15437 / B12) (Sulfolobus shibatae) protein is CCA-adding enzyme.